We begin with the raw amino-acid sequence, 222 residues long: Peptide methionine sulfoxide reductase MsrA 2 (222 aa).

Cysteine 56 is an active-site residue.

Belongs to the MsrA Met sulfoxide reductase family.

The catalysed reaction is L-methionyl-[protein] + [thioredoxin]-disulfide + H2O = L-methionyl-(S)-S-oxide-[protein] + [thioredoxin]-dithiol. It catalyses the reaction [thioredoxin]-disulfide + L-methionine + H2O = L-methionine (S)-S-oxide + [thioredoxin]-dithiol. Functionally, has an important function as a repair enzyme for proteins that have been inactivated by oxidation. Catalyzes the reversible oxidation-reduction of methionine sulfoxide in proteins to methionine. The protein is Peptide methionine sulfoxide reductase MsrA 2 (msrA2) of Nostoc sp. (strain PCC 7120 / SAG 25.82 / UTEX 2576).